An 84-amino-acid chain; its full sequence is uncharacterized protein (84 aa).

Positions K5–E31 form a coiled coil.

This is an uncharacterized protein from Methanocaldococcus jannaschii (strain ATCC 43067 / DSM 2661 / JAL-1 / JCM 10045 / NBRC 100440) (Methanococcus jannaschii).